Consider the following 388-residue polypeptide: Spermosin (388 aa).

Residues M1–C22 form the signal peptide. The segment covering F29–T49 has biased composition (polar residues). The interval F29–E98 is disordered. Residues Q54–Y64 are compositionally biased toward pro residues. 5 disulfide bridges follow: C116–C251, C163–C179, C265–C330, C295–C310, and C320–C349. In terms of domain architecture, Peptidase S1 spans I130–P372. Residues H178 and D231 each act as charge relay system in the active site. S324 serves as the catalytic Charge relay system.

This sequence belongs to the peptidase S1 family. In terms of assembly, heterodimer of a heavy chain and either an L1 light chain or an L2 light chain linked by a disulfide bond. Detected in sperm, but not in unfertilized eggs (at protein level). Expressed in gonad, but not in hepatopancreas, intestine or branchial basket.

Its subcellular location is the secreted. The enzyme catalyses Hydrolyzes arginyl bonds, preferably with Pro in the P2 position.. With respect to regulation, inhibited by peptidyl-argininals with Pro in the P2 position, diisopropyl fluorophosphate, phenylmethanesulfonyl fluoride, leupeptin, antipain, soybean trypsin inhibitor, aprotinin, ovomucoid, valyl-prolyl-arginyl-chloromethane, glycyl-valyl-arginyl-chloromethane, p-aminobenzamidine, benzamidine, zinc chloride and mercuric chloride. Functionally, trypsin-like protease with a narrow substrate specificity. Preferentially hydrolyzes substrates with Pro in the P2 position and Val in the P3 position. Plays a role in fertilization. This chain is Spermosin, found in Halocynthia roretzi (Sea squirt).